Here is a 208-residue protein sequence, read N- to C-terminus: Na(+)-translocating NADH-quinone reductase subunit D (208 aa).

Helical transmembrane passes span 42-62 (IVMG…ISLV), 72-92 (IIVQ…LLQA), 103-123 (VFVG…AFAM), 131-151 (LIDG…VATV), and 178-198 (NGLF…IWGL).

It belongs to the NqrDE/RnfAE family. Composed of six subunits; NqrA, NqrB, NqrC, NqrD, NqrE and NqrF.

It is found in the cell inner membrane. It carries out the reaction a ubiquinone + n Na(+)(in) + NADH + H(+) = a ubiquinol + n Na(+)(out) + NAD(+). Functionally, NQR complex catalyzes the reduction of ubiquinone-1 to ubiquinol by two successive reactions, coupled with the transport of Na(+) ions from the cytoplasm to the periplasm. NqrA to NqrE are probably involved in the second step, the conversion of ubisemiquinone to ubiquinol. The polypeptide is Na(+)-translocating NADH-quinone reductase subunit D (Neisseria gonorrhoeae (strain ATCC 700825 / FA 1090)).